Consider the following 108-residue polypeptide: MTIQIKNAINSYAYDKVVSLLEKGDIVTPQILDKWEKELHQTMKQNDQKIGRNTVRELLVQYILSEFDVKAFGVESKAYQKHEISDKTIRRMKNQRKKKFADLKITKV.

This is an uncharacterized protein from Enterobacteria phage T4 (Bacteriophage T4).